Reading from the N-terminus, the 411-residue chain is Protein CNPPD1 (411 aa).

A helical membrane pass occupies residues 231–253 (LSCLLAMAYVSSVALAVASMAVI).

It belongs to the CNPPD1 family.

The protein localises to the membrane. This Bos taurus (Bovine) protein is Protein CNPPD1 (CNPPD1).